The chain runs to 143 residues: Large ribosomal subunit protein uL11 (143 aa).

This sequence belongs to the universal ribosomal protein uL11 family. As to quaternary structure, part of the ribosomal stalk of the 50S ribosomal subunit. Interacts with L10 and the large rRNA to form the base of the stalk. L10 forms an elongated spine to which L12 dimers bind in a sequential fashion forming a multimeric L10(L12)X complex. In terms of processing, one or more lysine residues are methylated.

Its function is as follows. Forms part of the ribosomal stalk which helps the ribosome interact with GTP-bound translation factors. This chain is Large ribosomal subunit protein uL11, found in Allorhizobium ampelinum (strain ATCC BAA-846 / DSM 112012 / S4) (Agrobacterium vitis (strain S4)).